The following is an 861-amino-acid chain: APC membrane recruitment protein 3 (861 aa).

8 disordered regions span residues 1–77 (MELK…PKGG), 179–206 (AEGK…PPGE), 261–289 (PSLE…GPLQ), 351–415 (PLCP…FPRD), 514–558 (RGPT…GGAT), 576–644 (GLLA…SQKE), 716–742 (MLEQ…STQD), and 786–822 (AHGS…SQQE). Residues 362 to 384 (SKASSIDTGTPKSEQPESVSTSD) are compositionally biased toward polar residues. The span at 518–530 (PRAPPTPGQPAAP) shows a compositional bias: pro residues. Residues 584–595 (ALGGATQGTGTL) are compositionally biased toward low complexity. The span at 598–609 (DASREEETRGHS) shows a compositional bias: basic and acidic residues. Composition is skewed to polar residues over residues 615 to 629 (SMES…TSGK) and 719 to 730 (QKQSSSSPSMTT).

The protein belongs to the Amer family.

The protein resides in the cell membrane. Functionally, regulator of the canonical Wnt signaling pathway. Acts by specifically binding phosphatidylinositol 4,5-bisphosphate (PtdIns(4,5)P2), translocating to the cell membrane. This is APC membrane recruitment protein 3 (AMER3) from Homo sapiens (Human).